The sequence spans 546 residues: Apolipoprotein N-acyltransferase 1 (546 aa).

7 consecutive transmembrane segments (helical) span residues 14 to 34 (FLLFVLAVSLFALSHPNPLLP), 41 to 61 (AYGALAPLFLLVRWASGFAVV), 62 to 82 (FWGGAYGAFSYGAFSYWLFVF), 85 to 105 (VALCVVAGFSALFLAALCLAL), 122 to 142 (LVWLGYEYAKTLGFLGFPYGV), 151 to 171 (LPLIQVASVFGVWVVSALVVF), and 194 to 214 (FLSAAYSHWVSALVWVGLCGF). The CN hydrolase domain maps to 233-502 (AKVALVQPNG…PGVLVADVPI (270 aa)). Glutamate 280 acts as the Proton acceptor in catalysis. The active site involves lysine 361. Cysteine 413 acts as the Nucleophile in catalysis. A helical membrane pass occupies residues 514–534 (GDALGVFFCVASLFILIAGGV).

This sequence belongs to the CN hydrolase family. Apolipoprotein N-acyltransferase subfamily.

The protein localises to the cell inner membrane. The catalysed reaction is N-terminal S-1,2-diacyl-sn-glyceryl-L-cysteinyl-[lipoprotein] + a glycerophospholipid = N-acyl-S-1,2-diacyl-sn-glyceryl-L-cysteinyl-[lipoprotein] + a 2-acyl-sn-glycero-3-phospholipid + H(+). It participates in protein modification; lipoprotein biosynthesis (N-acyl transfer). Functionally, catalyzes the phospholipid dependent N-acylation of the N-terminal cysteine of apolipoprotein, the last step in lipoprotein maturation. The protein is Apolipoprotein N-acyltransferase 1 of Treponema pallidum (strain Nichols).